The primary structure comprises 63 residues: Large ribosomal subunit protein bL28 (63 aa).

This sequence belongs to the bacterial ribosomal protein bL28 family.

This chain is Large ribosomal subunit protein bL28, found in Desulfosudis oleivorans (strain DSM 6200 / JCM 39069 / Hxd3) (Desulfococcus oleovorans).